The chain runs to 536 residues: Putative UDP-glucuronosyltransferase ugt-47 (536 aa).

The signal sequence occupies residues 1–21 (MFRYHSILLLAILYFFEYGLA). Residues Asn-52 and Asn-308 are each glycosylated (N-linked (GlcNAc...) asparagine). Residues 497–517 (IIVPCFFVAFYFIIFPFFKLF) form a helical membrane-spanning segment.

It belongs to the UDP-glycosyltransferase family.

It is found in the membrane. The enzyme catalyses glucuronate acceptor + UDP-alpha-D-glucuronate = acceptor beta-D-glucuronoside + UDP + H(+). The chain is Putative UDP-glucuronosyltransferase ugt-47 (ugt-47) from Caenorhabditis elegans.